Consider the following 332-residue polypeptide: Azadirone synthase LFS (332 aa).

The Fe2OG dioxygenase domain maps to 181-286 (ANANYTNMFH…RYSTGTFICP (106 aa)). Fe cation is bound by residues H208, D210, and H269. R277 is a 2-oxoglutarate binding site.

It belongs to the iron/ascorbate-dependent oxidoreductase family. The cofactor is Fe(2+). Mainly expressed in petioles and, to a lower extent, in roots.

It carries out the reaction (1S,3bR,4R,5aR,9aR,9bR,11aS)-1-(1-hydroxy-4-oxobutan-2-yl)-3b,6,6,9a,11a-pentamethyl-7-oxo-1H,2H,3bH,4H,5H,5aH,6H,7H,9aH,9bH,10H,11H,11aH-cyclopenta[a]phenanthren-4-yl acetate + 2-oxoglutarate + O2 = azadirone + succinate + CO2 + 2 H2O. Its pathway is secondary metabolite biosynthesis; terpenoid biosynthesis. Functionally, 2-oxoglutarate-Fe(II) type oxidoreductase involved in the biosynthesis of limonoids triterpene natural products such as azadirachtin, an antifeedant widely used as bioinsecticide, and possessing many medicinal applications including anti-tumoral, anti-malarial, anti-rheumatic, antibacterial, anti-inflammatory, anti-pyretic and diuretic effects. Catalyzes the formation of azadirone. This Melia azedarach (Chinaberry tree) protein is Azadirone synthase LFS.